The primary structure comprises 105 residues: Large ribosomal subunit protein uL24 (105 aa).

This sequence belongs to the universal ribosomal protein uL24 family. In terms of assembly, part of the 50S ribosomal subunit.

In terms of biological role, one of two assembly initiator proteins, it binds directly to the 5'-end of the 23S rRNA, where it nucleates assembly of the 50S subunit. One of the proteins that surrounds the polypeptide exit tunnel on the outside of the subunit. The polypeptide is Large ribosomal subunit protein uL24 (Thermotoga maritima (strain ATCC 43589 / DSM 3109 / JCM 10099 / NBRC 100826 / MSB8)).